The following is a 333-amino-acid chain: Fatty acid hydroxylase domain-containing protein 2 (333 aa).

Helical transmembrane passes span 29-49, 77-97, 134-154, 168-188, 215-235, and 237-257; these read FILG…TWHL, ILFF…FNGL, TVLF…YPFL, FHWF…LFYY, VISL…PVIV, and PLVM…ALII. One can recognise a Fatty acid hydroxylase domain in the interval 176–299; sequence AIFTLIEEVL…LGVLDHLHGT (124 aa).

Belongs to the sterol desaturase family. Down-regulated in primary acute myeloid leukemia (AML) patients.

It localises to the cytoplasm. The protein localises to the membrane. Promotes megakaryocyte differentiation by enhancing ERK phosphorylation and up-regulating RUNX1 expression. This is Fatty acid hydroxylase domain-containing protein 2 (FAXDC2) from Homo sapiens (Human).